The following is a 602-amino-acid chain: UvrABC system protein C (602 aa).

A GIY-YIG domain is found at 19 to 97 (EEPGVYRMIG…IKSLAPRYNI (79 aa)). Residues 206–241 (SEVIDDLTARMHAAAERLAFEEAAACRDQVRVLQAV) enclose the UVR domain.

Belongs to the UvrC family. In terms of assembly, interacts with UvrB in an incision complex.

It localises to the cytoplasm. In terms of biological role, the UvrABC repair system catalyzes the recognition and processing of DNA lesions. UvrC both incises the 5' and 3' sides of the lesion. The N-terminal half is responsible for the 3' incision and the C-terminal half is responsible for the 5' incision. This is UvrABC system protein C from Aromatoleum aromaticum (strain DSM 19018 / LMG 30748 / EbN1) (Azoarcus sp. (strain EbN1)).